The following is a 553-amino-acid chain: Glucose-6-phosphate isomerase (553 aa).

Glutamate 357 functions as the Proton donor in the catalytic mechanism. Active-site residues include histidine 388 and lysine 514. Residues alanine 527–alanine 553 form a disordered region. Over residues leucine 541–alanine 553 the composition is skewed to basic and acidic residues.

The protein belongs to the GPI family.

The protein localises to the cytoplasm. The catalysed reaction is alpha-D-glucose 6-phosphate = beta-D-fructose 6-phosphate. The protein operates within carbohydrate biosynthesis; gluconeogenesis. Its pathway is carbohydrate degradation; glycolysis; D-glyceraldehyde 3-phosphate and glycerone phosphate from D-glucose: step 2/4. In terms of biological role, catalyzes the reversible isomerization of glucose-6-phosphate to fructose-6-phosphate. This Mycolicibacterium vanbaalenii (strain DSM 7251 / JCM 13017 / BCRC 16820 / KCTC 9966 / NRRL B-24157 / PYR-1) (Mycobacterium vanbaalenii) protein is Glucose-6-phosphate isomerase.